Consider the following 236-residue polypeptide: MTQIDNRFRRLSQALDYAFQKPELLRQALTHRSYSSANNERFEFVGDSILNYTVARMLYDQFPQLTEGELSRLRANLVNQNTLAEIAHELKLGDYLYLGEGELKSGGFNRPSILADALEATFAAVSFDADFAAAEQVVRRLYNQRVATIDTTRQAKDAKTRLQEALQARKLALPKYRILSQSGEAHEQWFKVECDLGEMALISTGDGGSRRAAEQQAAEAALTLLEQKLAASKKRS.

An RNase III domain is found at 8–130; it reads FRRLSQALDY…TFAAVSFDAD (123 aa). Mg(2+) is bound at residue E43. D47 is an active-site residue. D116 and E119 together coordinate Mg(2+). Residue E119 is part of the active site. In terms of domain architecture, DRBM spans 157-227; it reads DAKTRLQEAL…AEAALTLLEQ (71 aa).

This sequence belongs to the ribonuclease III family. As to quaternary structure, homodimer. The cofactor is Mg(2+).

The protein localises to the cytoplasm. It carries out the reaction Endonucleolytic cleavage to 5'-phosphomonoester.. Functionally, digests double-stranded RNA. Involved in the processing of primary rRNA transcript to yield the immediate precursors to the large and small rRNAs (23S and 16S). Processes some mRNAs, and tRNAs when they are encoded in the rRNA operon. Processes pre-crRNA and tracrRNA of type II CRISPR loci if present in the organism. The polypeptide is Ribonuclease 3 (Chromobacterium violaceum (strain ATCC 12472 / DSM 30191 / JCM 1249 / CCUG 213 / NBRC 12614 / NCIMB 9131 / NCTC 9757 / MK)).